Here is a 305-residue protein sequence, read N- to C-terminus: Urease accessory protein UreD (305 aa).

It belongs to the UreD family. UreD, UreF and UreG form a complex that acts as a GTP-hydrolysis-dependent molecular chaperone, activating the urease apoprotein by helping to assemble the nickel containing metallocenter of UreC. The UreE protein probably delivers the nickel.

It is found in the cytoplasm. Functionally, required for maturation of urease via the functional incorporation of the urease nickel metallocenter. The protein is Urease accessory protein UreD of Delftia acidovorans (strain DSM 14801 / SPH-1).